A 508-amino-acid chain; its full sequence is Photosystem II CP47 reaction center protein (508 aa).

6 consecutive transmembrane segments (helical) span residues 21–36 (AVHI…WAGS), 101–115 (IVFS…IWHW), 140–156 (GIHL…FGAF), 203–218 (IAAG…FHLS), 237–252 (VLSS…AFVV), and 457–472 (SFAL…HGSR).

Belongs to the PsbB/PsbC family. PsbB subfamily. As to quaternary structure, PSII is composed of 1 copy each of membrane proteins PsbA, PsbB, PsbC, PsbD, PsbE, PsbF, PsbH, PsbI, PsbJ, PsbK, PsbL, PsbM, PsbT, PsbX, PsbY, PsbZ, Psb30/Ycf12, at least 3 peripheral proteins of the oxygen-evolving complex and a large number of cofactors. It forms dimeric complexes. The cofactor is Binds multiple chlorophylls. PSII binds additional chlorophylls, carotenoids and specific lipids..

The protein resides in the plastid. It is found in the chloroplast thylakoid membrane. One of the components of the core complex of photosystem II (PSII). It binds chlorophyll and helps catalyze the primary light-induced photochemical processes of PSII. PSII is a light-driven water:plastoquinone oxidoreductase, using light energy to abstract electrons from H(2)O, generating O(2) and a proton gradient subsequently used for ATP formation. This Populus trichocarpa (Western balsam poplar) protein is Photosystem II CP47 reaction center protein.